The following is a 269-amino-acid chain: Fructose-2,6-bisphosphatase TIGAR (269 aa).

Residue His-11 is the Tele-phosphohistidine intermediate of the active site. Glu-89 acts as the Proton donor/acceptor in catalysis.

Belongs to the phosphoglycerate mutase family. As to quaternary structure, interacts with HK2; the interaction increases hexokinase HK2 activity in a hypoxia- and HIF1A-dependent manner, resulting in the regulation of mitochondrial membrane potential, thus increasing NADPH production and decreasing intracellular ROS levels. Expressed in olfactory bulb, cerebellum, and cortex. Expressed in neurons and astrocytes (at protein level). Expressed in intestinal crypt.

It is found in the cytoplasm. The protein resides in the nucleus. The protein localises to the mitochondrion. It carries out the reaction beta-D-fructose 2,6-bisphosphate + H2O = beta-D-fructose 6-phosphate + phosphate. Functionally, fructose-bisphosphatase hydrolyzing fructose-2,6-bisphosphate as well as fructose-1,6-bisphosphate. Acts as a negative regulator of glycolysis by lowering intracellular levels of fructose-2,6-bisphosphate in a p53/TP53-dependent manner, resulting in the pentose phosphate pathway (PPP) activation and NADPH production. Contributes to the generation of reduced glutathione to cause a decrease in intracellular reactive oxygen species (ROS) content, correlating with its ability to protect cells from oxidative or metabolic stress-induced cell death. Plays a role in promoting protection against cell death during hypoxia by decreasing mitochondria ROS levels in a HK2-dependent manner through a mechanism that is independent of its fructose-bisphosphatase activity. In response to cardiac damage stress, mediates p53-induced inhibition of myocyte mitophagy through ROS levels reduction and the subsequent inactivation of BNIP3. Reduced mitophagy results in an enhanced apoptotic myocyte cell death, and exacerbates cardiac damage. Plays a role in adult intestinal regeneration; contributes to the growth, proliferation and survival of intestinal crypts following tissue ablation. Plays a neuroprotective role against ischemic brain damage by enhancing PPP flux and preserving mitochondria functions. Protects glioma cells from hypoxia- and ROS-induced cell death by inhibiting glycolysis and activating mitochondrial energy metabolism and oxygen consumption in a TKTL1-dependent and p53/TP53-independent manner. Plays a role in cancer cell survival by promoting DNA repair through activating PPP flux in a CDK5-ATM-dependent signaling pathway during hypoxia and/or genome stress-induced DNA damage responses. Involved in intestinal tumor progression. The polypeptide is Fructose-2,6-bisphosphatase TIGAR (Mus musculus (Mouse)).